The following is a 329-amino-acid chain: Pantothenate kinase (329 aa).

Positions 1-21 (MISPVPSIPRSAHRQRPEATP) are disordered. Residue 107 to 114 (GSVAVGKS) coordinates ATP.

It belongs to the prokaryotic pantothenate kinase family.

It localises to the cytoplasm. It carries out the reaction (R)-pantothenate + ATP = (R)-4'-phosphopantothenate + ADP + H(+). The protein operates within cofactor biosynthesis; coenzyme A biosynthesis; CoA from (R)-pantothenate: step 1/5. The chain is Pantothenate kinase (coaA) from Streptomyces coelicolor (strain ATCC BAA-471 / A3(2) / M145).